Reading from the N-terminus, the 379-residue chain is UDP-4-amino-4-deoxy-L-arabinose--oxoglutarate aminotransferase (379 aa).

K182 is subject to N6-(pyridoxal phosphate)lysine.

It belongs to the DegT/DnrJ/EryC1 family. ArnB subfamily. As to quaternary structure, homodimer. The cofactor is pyridoxal 5'-phosphate.

It catalyses the reaction UDP-4-amino-4-deoxy-beta-L-arabinose + 2-oxoglutarate = UDP-beta-L-threo-pentopyranos-4-ulose + L-glutamate. The protein operates within nucleotide-sugar biosynthesis; UDP-4-deoxy-4-formamido-beta-L-arabinose biosynthesis; UDP-4-deoxy-4-formamido-beta-L-arabinose from UDP-alpha-D-glucuronate: step 2/3. It participates in bacterial outer membrane biogenesis; lipopolysaccharide biosynthesis. Catalyzes the conversion of UDP-4-keto-arabinose (UDP-Ara4O) to UDP-4-amino-4-deoxy-L-arabinose (UDP-L-Ara4N). The modified arabinose is attached to lipid A and is required for resistance to polymyxin and cationic antimicrobial peptides. The chain is UDP-4-amino-4-deoxy-L-arabinose--oxoglutarate aminotransferase from Escherichia coli O1:K1 / APEC.